Here is a 307-residue protein sequence, read N- to C-terminus: Ribonuclease HIII (307 aa).

One can recognise an RNase H type-2 domain in the interval 93–307; sequence MSVIGSDEVG…ANTQKAKKWL (215 aa). Positions 99, 100, and 204 each coordinate a divalent metal cation.

The protein belongs to the RNase HII family. RnhC subfamily. Mn(2+) serves as cofactor. It depends on Mg(2+) as a cofactor.

It localises to the cytoplasm. It carries out the reaction Endonucleolytic cleavage to 5'-phosphomonoester.. Its function is as follows. Endonuclease that specifically degrades the RNA of RNA-DNA hybrids. The polypeptide is Ribonuclease HIII (Bacillus pumilus (strain SAFR-032)).